A 209-amino-acid polypeptide reads, in one-letter code: Thymidylate kinase (209 aa).

Residue 10 to 17 participates in ATP binding; sequence GLDGAGKS.

Belongs to the thymidylate kinase family.

The enzyme catalyses dTMP + ATP = dTDP + ADP. In terms of biological role, phosphorylation of dTMP to form dTDP in both de novo and salvage pathways of dTTP synthesis. This Francisella tularensis subsp. tularensis (strain FSC 198) protein is Thymidylate kinase.